A 381-amino-acid polypeptide reads, in one-letter code: tRNA pseudouridine synthase D (381 aa).

Asp81 acts as the Nucleophile in catalysis. The TRUD domain occupies 160-335 (GMPNYFGSQR…TLGSRRFFWV (176 aa)).

It belongs to the pseudouridine synthase TruD family.

The enzyme catalyses uridine(13) in tRNA = pseudouridine(13) in tRNA. Functionally, responsible for synthesis of pseudouridine from uracil-13 in transfer RNAs. This is tRNA pseudouridine synthase D from Helicobacter pylori (strain ATCC 700392 / 26695) (Campylobacter pylori).